We begin with the raw amino-acid sequence, 546 residues long: 5'-nucleotidase domain-containing protein 3 (546 aa).

The Nucleophile role is filled by D100. Residues D100 and D102 each contribute to the Mg(2+) site. D102 (proton donor) is an active-site residue. 249–257 (KDSIRDVHI) contributes to the substrate binding site. D387 provides a ligand contact to Mg(2+).

This sequence belongs to the 5'(3')-deoxyribonucleotidase family. It depends on Mg(2+) as a cofactor.

This is 5'-nucleotidase domain-containing protein 3 (Nt5dc3) from Mus musculus (Mouse).